Here is a 390-residue protein sequence, read N- to C-terminus: Tryptophan synthase beta chain (390 aa).

Position 90 is an N6-(pyridoxal phosphate)lysine (Lys-90).

Belongs to the TrpB family. Tetramer of two alpha and two beta chains. Requires pyridoxal 5'-phosphate as cofactor.

It catalyses the reaction (1S,2R)-1-C-(indol-3-yl)glycerol 3-phosphate + L-serine = D-glyceraldehyde 3-phosphate + L-tryptophan + H2O. Its pathway is amino-acid biosynthesis; L-tryptophan biosynthesis; L-tryptophan from chorismate: step 5/5. In terms of biological role, the beta subunit is responsible for the synthesis of L-tryptophan from indole and L-serine. The sequence is that of Tryptophan synthase beta chain from Bacteroides fragilis (strain ATCC 25285 / DSM 2151 / CCUG 4856 / JCM 11019 / LMG 10263 / NCTC 9343 / Onslow / VPI 2553 / EN-2).